Here is a 369-residue protein sequence, read N- to C-terminus: uncharacterized protein (369 aa).

This sequence to A.pernix APE1276 and APE1804.

This is an uncharacterized protein from Saccharolobus solfataricus (strain ATCC 35092 / DSM 1617 / JCM 11322 / P2) (Sulfolobus solfataricus).